The chain runs to 426 residues: MTELDLNQYMDRVGRQARAASRAMARASTADKNRALLTIAAAIRRDADKLKAVNARDVERARANGQDAAFVDRLTLSDKAIKTMAEGLEQIAALADPIGEISNMKFRPTGIQVGQMRVPLGVIGIIYESRPNVTIDAAALCLKSGNATILRGGSEAIESNTALAALVAEGLASAGLPPEAVQVVETTDRAAVGRLITMTEYVDVIVPRGGKSLIARLMEEARVPMIKHLDGICHVFIDADADLDKAVRVCDNAKTQRYAPCNTMETLLVSQDIAARALPPLCRIYQEKGVELRVCPATRAMLEAAGFSGLVDAHEEDWRLEYLAPILAIKTVAGLDEAIAHINEYGSHHTDSIITENYSTGMRFIREVDSASVMINASTRFADGFEYGLGAEIGISNDKLHARGPVGLEGLTSLKYVVFGHGEIRT.

This sequence belongs to the gamma-glutamyl phosphate reductase family.

It localises to the cytoplasm. It carries out the reaction L-glutamate 5-semialdehyde + phosphate + NADP(+) = L-glutamyl 5-phosphate + NADPH + H(+). Its pathway is amino-acid biosynthesis; L-proline biosynthesis; L-glutamate 5-semialdehyde from L-glutamate: step 2/2. In terms of biological role, catalyzes the NADPH-dependent reduction of L-glutamate 5-phosphate into L-glutamate 5-semialdehyde and phosphate. The product spontaneously undergoes cyclization to form 1-pyrroline-5-carboxylate. The protein is Gamma-glutamyl phosphate reductase of Cupriavidus pinatubonensis (strain JMP 134 / LMG 1197) (Cupriavidus necator (strain JMP 134)).